The following is a 138-amino-acid chain: Small ribosomal subunit protein uS11 (138 aa).

Residues 1 to 12 (MAQAKKGGTAAK) show a composition bias toward low complexity. 2 disordered regions span residues 1–32 (MAQA…AAHI) and 119–138 (ISDV…RRRV). Residues 13–22 (KGQKTRRREK) are compositionally biased toward basic residues.

It belongs to the universal ribosomal protein uS11 family. In terms of assembly, part of the 30S ribosomal subunit. Interacts with proteins S7 and S18. Binds to IF-3.

Functionally, located on the platform of the 30S subunit, it bridges several disparate RNA helices of the 16S rRNA. Forms part of the Shine-Dalgarno cleft in the 70S ribosome. In Mycolicibacterium smegmatis (strain ATCC 700084 / mc(2)155) (Mycobacterium smegmatis), this protein is Small ribosomal subunit protein uS11.